We begin with the raw amino-acid sequence, 98 residues long: MSMVYANIFLAFIMSLMGLLMYRSHLMSSLLCLEGMMLSLFVMMTVTILNNHFTLANMAPIILLVFAACEAALGLSLLVMVSNTYGTDYVQNLNLLQC.

3 helical membrane-spanning segments follow: residues 1 to 21 (MSMVYANIFLAFIMSLMGLLM), 29 to 49 (SLLCLEGMMLSLFVMMTVTIL), and 61 to 81 (IILLVFAACEAALGLSLLVMV).

It belongs to the complex I subunit 4L family. As to quaternary structure, core subunit of respiratory chain NADH dehydrogenase (Complex I) which is composed of 45 different subunits.

The protein resides in the mitochondrion inner membrane. The enzyme catalyses a ubiquinone + NADH + 5 H(+)(in) = a ubiquinol + NAD(+) + 4 H(+)(out). Its function is as follows. Core subunit of the mitochondrial membrane respiratory chain NADH dehydrogenase (Complex I) which catalyzes electron transfer from NADH through the respiratory chain, using ubiquinone as an electron acceptor. Part of the enzyme membrane arm which is embedded in the lipid bilayer and involved in proton translocation. This Phoca fasciata (Ribbon seal) protein is NADH-ubiquinone oxidoreductase chain 4L (MT-ND4L).